We begin with the raw amino-acid sequence, 217 residues long: 25 kDa ookinete surface antigen (217 aa).

Positions 1–16 (MNKLYSLFLFLFIQLS) are cleaved as a signal peptide. An EGF-like 1; truncated domain is found at 30–59 (CKKGFLIQMSGHLECKCENDLVLVNEETCE). 3 EGF-like domains span residues 61–106 (KVLK…NVCI), 106–150 (ILNE…NKCS), and 153–193 (GETK…STCT). Disulfide bonds link Cys-65–Cys-80, Cys-74–Cys-92, Cys-94–Cys-105, Cys-110–Cys-120, Cys-115–Cys-133, Cys-135–Cys-149, Cys-157–Cys-168, Cys-161–Cys-177, and Cys-179–Cys-192. An N-linked (GlcNAc...) asparagine glycan is attached at Asn-112. 2 N-linked (GlcNAc...) asparagine glycosylation sites follow: Asn-165 and Asn-187. The GPI-anchor amidated serine moiety is linked to residue Ser-196. A propeptide spans 197-217 (VYNILNLSLIFVLFSVCFFIM) (removed in mature form). Residue Asn-202 is glycosylated (N-linked (GlcNAc...) asparagine).

The protein resides in the cell membrane. The chain is 25 kDa ookinete surface antigen from Plasmodium reichenowi.